A 681-amino-acid chain; its full sequence is Anaphase-promoting complex subunit 2 (681 aa).

Belongs to the cullin family. The APC/C is composed of at least 13 subunits: apc1, apc2, nuc2, apc4, apc5, cut9, apc8, apc10, apc11, hcn1, apc13, apc14 and apc15.

Its function is as follows. Component of the anaphase-promoting complex/cyclosome (APC/C), a cell cycle-regulated E3 ubiquitin-protein ligase complex that controls progression through mitosis and the G1 phase of the cell cycle. The APC/C is thought to confer substrate specificity and, in the presence of ubiquitin-conjugating E2 enzymes, it catalyzes the formation of protein-ubiquitin conjugates that are subsequently degraded by the 26S proteasome. The chain is Anaphase-promoting complex subunit 2 (apc2) from Schizosaccharomyces pombe (strain 972 / ATCC 24843) (Fission yeast).